We begin with the raw amino-acid sequence, 101 residues long: Large ribosomal subunit protein bL25 (101 aa).

It belongs to the bacterial ribosomal protein bL25 family. As to quaternary structure, part of the 50S ribosomal subunit; part of the 5S rRNA/L5/L18/L25 subcomplex. Contacts the 5S rRNA. Binds to the 5S rRNA independently of L5 and L18.

This is one of the proteins that binds to the 5S RNA in the ribosome where it forms part of the central protuberance. The polypeptide is Large ribosomal subunit protein bL25 (Thermosynechococcus vestitus (strain NIES-2133 / IAM M-273 / BP-1)).